The chain runs to 678 residues: RxLR effector protein PITG_16705 (678 aa).

Positions 1–20 (MHLFFLTAVAFVITSVSVDA) are cleaved as a signal peptide. A RxLR-dEER motif is present at residues 46–61 (RLLRKNSTVDLVGEER).

This sequence belongs to the RxLR effector family.

It is found in the secreted. It localises to the host cytoplasm. In terms of biological role, effector that enhances P.infestans colonization of Nicotiana benthamiana leaves. In Phytophthora infestans (strain T30-4) (Potato late blight agent), this protein is RxLR effector protein PITG_16705.